Consider the following 725-residue polypeptide: Phosphoribosylformylglycinamidine synthase subunit PurL (725 aa).

Residue His-41 is part of the active site. Tyr-44 and Lys-83 together coordinate ATP. Residue Glu-85 coordinates Mg(2+). Residues 86–89 and Arg-108 contribute to the substrate site; that span reads SHNH. His-87 (proton acceptor) is an active-site residue. Residue Asp-109 participates in Mg(2+) binding. Position 231 (Gln-231) interacts with substrate. Asp-259 lines the Mg(2+) pocket. 303 to 305 provides a ligand contact to substrate; that stretch reads ESQ. Residues Asp-485 and Gly-522 each coordinate ATP. Position 523 (Asn-523) interacts with Mg(2+). Ser-525 serves as a coordination point for substrate.

It belongs to the FGAMS family. As to quaternary structure, monomer. Part of the FGAM synthase complex composed of 1 PurL, 1 PurQ and 2 PurS subunits.

The protein resides in the cytoplasm. The catalysed reaction is N(2)-formyl-N(1)-(5-phospho-beta-D-ribosyl)glycinamide + L-glutamine + ATP + H2O = 2-formamido-N(1)-(5-O-phospho-beta-D-ribosyl)acetamidine + L-glutamate + ADP + phosphate + H(+). It participates in purine metabolism; IMP biosynthesis via de novo pathway; 5-amino-1-(5-phospho-D-ribosyl)imidazole from N(2)-formyl-N(1)-(5-phospho-D-ribosyl)glycinamide: step 1/2. Its function is as follows. Part of the phosphoribosylformylglycinamidine synthase complex involved in the purines biosynthetic pathway. Catalyzes the ATP-dependent conversion of formylglycinamide ribonucleotide (FGAR) and glutamine to yield formylglycinamidine ribonucleotide (FGAM) and glutamate. The FGAM synthase complex is composed of three subunits. PurQ produces an ammonia molecule by converting glutamine to glutamate. PurL transfers the ammonia molecule to FGAR to form FGAM in an ATP-dependent manner. PurS interacts with PurQ and PurL and is thought to assist in the transfer of the ammonia molecule from PurQ to PurL. This chain is Phosphoribosylformylglycinamidine synthase subunit PurL, found in Thermus thermophilus (strain ATCC BAA-163 / DSM 7039 / HB27).